The chain runs to 396 residues: Enoyl-[acyl-carrier-protein] reductase [NADH] (396 aa).

Residues 48-53, 74-75, 111-112, and 139-140 contribute to the NAD(+) site; these read GASTGY, FE, DA, and LA. Tyr-225 serves as a coordination point for substrate. Residue Tyr-235 is the Proton donor of the active site. NAD(+) contacts are provided by residues Lys-244 and 273 to 275; that span reads VVT.

This sequence belongs to the TER reductase family. In terms of assembly, monomer.

It catalyses the reaction a 2,3-saturated acyl-[ACP] + NAD(+) = a (2E)-enoyl-[ACP] + NADH + H(+). It functions in the pathway lipid metabolism; fatty acid biosynthesis. Its function is as follows. Involved in the final reduction of the elongation cycle of fatty acid synthesis (FAS II). Catalyzes the reduction of a carbon-carbon double bond in an enoyl moiety that is covalently linked to an acyl carrier protein (ACP). This is Enoyl-[acyl-carrier-protein] reductase [NADH] from Colwellia psychrerythraea (strain 34H / ATCC BAA-681) (Vibrio psychroerythus).